A 52-amino-acid chain; its full sequence is Large ribosomal subunit protein bL33 (52 aa).

The protein belongs to the bacterial ribosomal protein bL33 family.

In Chlamydia muridarum (strain MoPn / Nigg), this protein is Large ribosomal subunit protein bL33 (rpmG).